The primary structure comprises 445 residues: Probable multidrug resistance protein YpnP (445 aa).

12 helical membrane passes run 15-35 (LVLFSMPIMLGNALQVSFQFI), 49-69 (LGAAAVSSTIVLTVLSFILGL), 95-115 (AFVVLLTGLSIGFGAAGFFLS), 136-156 (LQIQFIGILFLFGYNFISTVL), 168-188 (FIAFAVVLNTVLAPLFISVFR), 194-214 (AAYSTILSQGIAFLYGLFYVI), 240-260 (IPAGLQMMVITGGMMAIMSVV), 277-297 (LDSIITLPAMAAGTAVNSMAG), 314-334 (LGVIAVISCMLVIAVMIWVFG), 355-375 (LKWIAFFYPFIGVNFVLNGIV), 384-404 (VLVLNLISFWVLRYPFTALFS), and 411-431 (GIGLGIGMSFLFSSCAAFLYY).

Belongs to the multi antimicrobial extrusion (MATE) (TC 2.A.66.1) family.

The protein resides in the cell membrane. In Bacillus subtilis (strain 168), this protein is Probable multidrug resistance protein YpnP (ypnP).